The primary structure comprises 1213 residues: Chitin synthase 3 (1213 aa).

A disordered region spans residues 1–97 (MSNFRDSSSP…TPPHQEEEED (97 aa)). Over 1–168 (MSNFRDSSSP…KPKHDIYFWK (168 aa)) the chain is Cytoplasmic. Residues 32-44 (IRPERSRMDESHP) are compositionally biased toward basic and acidic residues. The span at 75–87 (ELSTSRSHLSNYA) shows a compositional bias: polar residues. The helical transmembrane segment at 169 to 189 (VYCYAITFWAPAPLLKLFGLP) threads the bilayer. At 190–200 (TKDRQFAWREK) the chain is on the extracellular side. Residues 201 to 221 (IGLISCILYVGAFVAYLTFGF) form a helical membrane-spanning segment. Topologically, residues 222-450 (TKTVCSSQVV…TDTIGCIASK (229 aa)) are cytoplasmic. A helical membrane pass occupies residues 451 to 471 (VVLYMSLVFILSVVVVKFIMA). The Extracellular portion of the chain corresponds to 472 to 1016 (CWFKWVTSRK…INSTVHNLFE (545 aa)). Asn588 and Asn1008 each carry an N-linked (GlcNAc...) asparagine glycan. Residues 1017–1037 (LVLVKDLCGTFCFSMQFVIFI) traverse the membrane as a helical segment. Residues 1038-1039 (EL) are Cytoplasmic-facing. Residues 1040–1060 (IGTLVLPAAITFTIYVIIVAI) traverse the membrane as a helical segment. At 1061–1065 (VSKPT) the chain is on the extracellular side. The chain crosses the membrane as a helical span at residues 1066–1086 (PVMSLVLLAVIFGLPGCLIVI). At 1087–1213 (TVSSLSYLVY…LSQGSSSGSS (127 aa)) the chain is on the cytoplasmic side. Residues 1161 to 1213 (ERRSTENRKQQQQQQLTNNSSNNLAVPGAAWDPSNTGGNLIDDLSQGSSSGSS) are disordered.

The protein belongs to the chitin synthase family. Class IV subfamily.

It is found in the cell membrane. The catalysed reaction is [(1-&gt;4)-N-acetyl-beta-D-glucosaminyl](n) + UDP-N-acetyl-alpha-D-glucosamine = [(1-&gt;4)-N-acetyl-beta-D-glucosaminyl](n+1) + UDP + H(+). Functionally, polymerizes chitin, a structural polymer of the cell wall and septum, by transferring the sugar moiety of UDP-GlcNAc to the non-reducing end of the growing chitin polymer. In Candida albicans (Yeast), this protein is Chitin synthase 3 (CHS3).